Here is a 239-residue protein sequence, read N- to C-terminus: Ribosomal RNA small subunit methyltransferase G (239 aa).

S-adenosyl-L-methionine is bound by residues Gly77, Phe82, 128 to 129, and Arg147; that span reads AE. The tract at residues 215–239 is disordered; the sequence is IRKTKSTPKKYPRKPGTPNKSPIEG. Residues 216 to 227 are compositionally biased toward basic residues; sequence RKTKSTPKKYPR.

Belongs to the methyltransferase superfamily. RNA methyltransferase RsmG family.

The protein localises to the cytoplasm. Its function is as follows. Specifically methylates the N7 position of guanine in position 535 of 16S rRNA. The polypeptide is Ribosomal RNA small subunit methyltransferase G (Bacillus velezensis (strain DSM 23117 / BGSC 10A6 / LMG 26770 / FZB42) (Bacillus amyloliquefaciens subsp. plantarum)).